A 1291-amino-acid polypeptide reads, in one-letter code: Ethylene-insensitive protein 2.2 (1291 aa).

6 consecutive transmembrane segments (helical) span residues 18–38, 48–68, 96–116, 128–148, 155–175, and 195–215; these read ALPALGPGLLIAIGYVDPGKW, FGFDLVLPMLIFNFVAILCQY, FLGVQAALSVIALDLTMILGI, LSTCVFLAAVDAVLFPVFATL, SFLSTCIAGFLLLLYFFGVLI, and SAFALMSLLGASIMPHNFFLH. Asn227 carries N-linked (GlcNAc...) asparagine glycosylation. Transmembrane regions (helical) follow at residues 231 to 251, 253 to 273, 288 to 308, 335 to 355, 356 to 376, 393 to 413, and 441 to 461; these read GALCLNHFFAILCIFSGIYLV, YVLMNSAANVFYSTGLVLLTF, VALCVFSLILFFANHITALTW, IIAVVPALYCVWTSGVEGIYQ, LLIFTQVMVALLLPSSVIPLF, FLEFLALISFMGMLGIKIIFV, and VLLITACSSFCLMLWLAATPL. The interval 498–518 is disordered; sequence TEEESIGGQEQLSGPGKSAES. N-linked (GlcNAc...) asparagine glycosylation is present at Asn550. A disordered region spans residues 614 to 662; sequence AEKEDDEGDSWEPEESSKGVPGSTSSLTSDGPGSFRSLSGKSDEGGNGA. Residues 617 to 627 show a composition bias toward acidic residues; the sequence is EDDEGDSWEPE. Positions 635–653 are enriched in polar residues; the sequence is GSTSSLTSDGPGSFRSLSG. Ser647 and Ser664 each carry phosphoserine. Disordered regions lie at residues 742 to 768 and 787 to 808; these read QIHSSLGDSPNHLRVPSNIDSSYGGQR and GPSRSIADSSERRYSSVHTLPS. Positions 759–768 are enriched in polar residues; the sequence is NIDSSYGGQR. Thr818 carries the phosphothreonine modification. Positions 836 to 856 are disordered; that stretch reads GSSSLNGQMDSPAPISPSLGP. N-linked (GlcNAc...) asparagine glycosylation occurs at Asn891. Phosphoserine is present on Ser923. Residue Asn1027 is glycosylated (N-linked (GlcNAc...) asparagine). A disordered region spans residues 1210–1229; that stretch reads HRSSPPVSNGMLPPASKPGR. Residues 1262–1269 carry the Nuclear localization signal motif; sequence DVAFPKGK.

This sequence belongs to the NRAMP (TC 2.A.55) family.

It localises to the endoplasmic reticulum membrane. The protein resides in the nucleus. Its subcellular location is the cytoplasm. Functionally, central factor in signaling pathways regulated by ethylene (ET) and involved in various processes including development, plant defense, senescence, nucleotide sugar flux, and tropisms. Its function is as follows. Trafficking signal inducing ethylene response. The nuclear localization is both necessary and sufficient to activate EIN3-mediated transcription and ethylene responses. This Populus trichocarpa (Western balsam poplar) protein is Ethylene-insensitive protein 2.2.